A 541-amino-acid chain; its full sequence is Forkhead box protein O (541 aa).

The segment covering 118-150 has biased composition (polar residues); that stretch reads NEQCGQLGGASSNGSTAMLHTPDGSNSHQTSFP. Disordered stretches follow at residues 118–168 and 252–291; these read NEQC…GKKT and WVIN…GAKK. The segment at residues 175-268 is a DNA-binding region (fork-head); that stretch reads WGNMSYAELI…KPGRNPRRTR (94 aa). The residue at position 273 (T273) is a Phosphothreonine. S319 bears the Phosphoserine; by CaMK2 mark.

Interacts with rle-1. Interacts with unc-43 and tax-6. Interacts with jnk-1. Interacts with ftt-2. Interacts with prmt-1. Interacts with hcf-1. In terms of processing, phosphorylated by akt-1 and/or akt-2. Phosphorylated by sgk-1. Phosphorylated by unc-43. Phosphorylated by jnk-1. Dephosphorylated by tax-6 in vitro. Post-translationally, ubiquitinated. Ubiquitination by rle-1 leads to proteasome-mediated degradation. Methylation by prmt-1 prevents phosphorylation and promotes translocation to the nucleus to allow for daf-16-dependent transcription. Isoform b and isoform c are expressed in ectoderm, muscles, intestine and neurons. Isoform b is also expressed in the pharynx. The intestine appears to be the primary site of longevity function.

Its subcellular location is the nucleus. The protein localises to the cytoplasm. Functionally, forkhead-type transcription factor. Binds to the promoters of genes that contain the daf-16/FOXO binding element (DBE), TTGTTTAC, in their regulatory region. Functions in the Insulin/IGF-1-like signaling (IIS) mediated pathway which affects lipogenesis, lifespan, starvation survival, heat shock and oxidative stress responses, sleep, associative memory, and dauer formation. Longevity signaling predominantly arises from expression in the intestine. Acts in the intestine to mediate the role of slo-1 in age-associated decline in motor activity and longevity. Transcriptional activity of daf-16/FOXO is negatively regulated by interaction with host cell factor homolog hcf-1; and by cytoplasmic sequestration by association with ftt-2. Inhibition is required for the carbon dioxide (CO2) avoidance response. Upon loss of inhibition, daf-16 translocates to the nucleus to regulate genes that result in delayed reproduction and growth while increasing stress resistance starvation tolerance and longevity. Association with arginine methyltransferase prmt-1 prevents phosphorylation and allows for translocation to the nucleus and the subsequent transcription of longevity-related genes. Modulation of its activity by cGMP levels in sensory neurons regulates lifespan. Has a protective role against muscle dystrophy. Involved in mediating protection against aberrant protein aggregation proteotoxicity. Influences transcription of genes that code for proteins involved in immunity as part of a general stress response. Targets genes that inhibit and stimulate tumor growth. Targets kinases, phosphatases and transcription factors that are primarily involved in signaling and gene regulation. Thought to regulate ins-7 in FOXO-to-FOXO signaling, which coordinates daf-16 expression. Activity is positively regulated by shc-1-mediated inhibition of daf-2 and activation of JNK pathway. Through the regulation of its activity by shc-1-mediated inhibition of daf-2 and activation of JNK pathway, plays a role in maintaining the integrity of the gonad. Functions by indirect interaction with jnk-1 of the mitogen-activated protein kinase (MAPK) pathway. Involved in increased proteasome activity by activating expression of rpn-6.1 in response to proteotoxic stress, leading to enhanced assembly of the 26S proteasome, followed by higher proteasome activity. Also regulates proteasome activity in the intestine by preventing expression of deubiquitinase ubh-4. Represses transcription of natc-1. Involved in regulation of srh-234 expression. Binds to the promoter of the AMPK-gamma regulatory subunit, aakg-4, and activates its transcription. Also activates transcription of AMPK-gamma regulatory subunit, aakg-1. Maintains endoplasmic reticulum (ER) function by inducing protein degradation and elimination to remove misfolded secretory proteins from the ER independently of the ire-1/xbp-1 unfolded protein response pathway. Regulates epidermal innate immunity to nematophagous fungal infection and physical wounding which trigger bli-3 induced ROS release, leading to daf-16 activation independently of daf-2 signaling. May negatively regulate resistance to stress caused by oxidized cholesterol adducts by preventing the activation of daf-9 and nuclear hormone receptor daf-12, two members of the steroid signaling pathway. Promotes apoptosis during embryonic development. Probably through the regulation of the autophagy genes atg-18 and atg-16.2, plays a role in regulating stem cell number in the germline during larval development. Plays a role in learning and memory; including associative memory, and aversive gustatory associated learning known as salt avoidance learning. Plays a role in regulating gene transcription in response to white light exposure. Binds to the promoter of dex-1 to positively regulate its expression in seam cells during the dauer phase. Plays a role in transgenerational lipid accumulation in response to a high-fat diet. Its function is as follows. Functions in the Insulin/IGF-1-like signaling (IIS) mediated pathway. May play a role in lifespan modulation, but less significant than that played by isoforms d and f. In terms of biological role, functions in the Insulin/IGF-1-like signaling (IIS) mediated pathway. Transcript level in the early adult may play a role in lifespan modulation, but effect is more significant than that played by isoform a. The polypeptide is Forkhead box protein O (Caenorhabditis elegans).